The sequence spans 340 residues: DNA-directed RNA polymerase subunit alpha (340 aa).

The alpha N-terminal domain (alpha-NTD) stretch occupies residues 1–236 (MLSLSKNWNT…EQLQLFISFE (236 aa)). Residues 251-340 (FAPYLLKRVD…LSKRYEDSYN (90 aa)) form an alpha C-terminal domain (alpha-CTD) region.

It belongs to the RNA polymerase alpha chain family. In terms of assembly, homodimer. The RNAP catalytic core consists of 2 alpha, 1 beta, 1 beta' and 1 omega subunit. When a sigma factor is associated with the core the holoenzyme is formed, which can initiate transcription.

It carries out the reaction RNA(n) + a ribonucleoside 5'-triphosphate = RNA(n+1) + diphosphate. Functionally, DNA-dependent RNA polymerase catalyzes the transcription of DNA into RNA using the four ribonucleoside triphosphates as substrates. The protein is DNA-directed RNA polymerase subunit alpha of Rickettsia peacockii (strain Rustic).